Reading from the N-terminus, the 152-residue chain is NAD(P)H-quinone oxidoreductase subunit N (152 aa).

Belongs to the complex I NdhN subunit family. As to quaternary structure, NDH-1 can be composed of about 15 different subunits; different subcomplexes with different compositions have been identified which probably have different functions.

It is found in the cellular thylakoid membrane. The catalysed reaction is a plastoquinone + NADH + (n+1) H(+)(in) = a plastoquinol + NAD(+) + n H(+)(out). It carries out the reaction a plastoquinone + NADPH + (n+1) H(+)(in) = a plastoquinol + NADP(+) + n H(+)(out). NDH-1 shuttles electrons from an unknown electron donor, via FMN and iron-sulfur (Fe-S) centers, to quinones in the respiratory and/or the photosynthetic chain. The immediate electron acceptor for the enzyme in this species is believed to be plastoquinone. Couples the redox reaction to proton translocation, and thus conserves the redox energy in a proton gradient. Cyanobacterial NDH-1 also plays a role in inorganic carbon-concentration. In Prochlorococcus marinus (strain SARG / CCMP1375 / SS120), this protein is NAD(P)H-quinone oxidoreductase subunit N.